The following is a 243-amino-acid chain: UPF0246 protein spyM18_2163 (243 aa).

The protein belongs to the UPF0246 family.

This is UPF0246 protein spyM18_2163 from Streptococcus pyogenes serotype M18 (strain MGAS8232).